The primary structure comprises 280 residues: MDIKINDITLGNNSPFVLFGGINVLEDLDSTLQTCAHYVEVTRKLGIPYIFKASFDKANRSSIHSYRGVGLEEGLKIFEKVKAEFGIPVITDVHEPHQCQPVAEVCDVIQLPAFLARQTDLVAAMAETGNVINIKKPQFLSPSQMKNIVEKFREAGNGKLILCERGSSFGYDNLVVDMLGFGVMKQTCGNLPVIFDVTHSLQTRDAGSAASGGRRAQALDLALAGMATRLAGLFLESHPDPKLAKCDGPSALPLHLLENFLIRIKALDDLIKSQPILTIE.

It belongs to the KdsA family.

It is found in the cytoplasm. It catalyses the reaction D-arabinose 5-phosphate + phosphoenolpyruvate + H2O = 3-deoxy-alpha-D-manno-2-octulosonate-8-phosphate + phosphate. The protein operates within carbohydrate biosynthesis; 3-deoxy-D-manno-octulosonate biosynthesis; 3-deoxy-D-manno-octulosonate from D-ribulose 5-phosphate: step 2/3. Its pathway is bacterial outer membrane biogenesis; lipopolysaccharide biosynthesis. This chain is 2-dehydro-3-deoxyphosphooctonate aldolase, found in Neisseria gonorrhoeae (strain NCCP11945).